Here is a 300-residue protein sequence, read N- to C-terminus: 4-hydroxy-tetrahydrodipicolinate synthase (300 aa).

Thr46 serves as a coordination point for pyruvate. The active-site Proton donor/acceptor is Tyr134. Residue Lys162 is the Schiff-base intermediate with substrate of the active site. Ile207 serves as a coordination point for pyruvate.

Belongs to the DapA family. Homotetramer; dimer of dimers.

It is found in the cytoplasm. It catalyses the reaction L-aspartate 4-semialdehyde + pyruvate = (2S,4S)-4-hydroxy-2,3,4,5-tetrahydrodipicolinate + H2O + H(+). The protein operates within amino-acid biosynthesis; L-lysine biosynthesis via DAP pathway; (S)-tetrahydrodipicolinate from L-aspartate: step 3/4. Functionally, catalyzes the condensation of (S)-aspartate-beta-semialdehyde [(S)-ASA] and pyruvate to 4-hydroxy-tetrahydrodipicolinate (HTPA). This Protochlamydia amoebophila (strain UWE25) protein is 4-hydroxy-tetrahydrodipicolinate synthase.